We begin with the raw amino-acid sequence, 745 residues long: Cytoplasmic polyadenylation element-binding protein 3 (745 aa).

Disordered stretches follow at residues 1–45 (MNLN…KSPT), 94–180 (VGSK…TNNS), and 204–283 (NKAN…FGEL). The span at 162–175 (LNFERDAEQKKDST) shows a compositional bias: basic and acidic residues. Positions 219–229 (ETPTDSPQKGF) are enriched in polar residues. Positions 230-240 (SSSTESSPSDS) are enriched in low complexity. Residues 241–255 (MNQFPSREHFTSANE) are compositionally biased toward polar residues. Residues 264 to 276 (FQQEHGNKNRDSD) show a composition bias toward basic and acidic residues. An RRM domain is found at 297–319 (IFVGGVPWDITEAALKDSFGEFG).

Cytoplasmic polyadenylation element binding protein that binds to and regulates the translation of specific mRNAs. May not be required for oogenesis. In Caenorhabditis elegans, this protein is Cytoplasmic polyadenylation element-binding protein 3 (cpb-3).